The chain runs to 480 residues: Glucosylglycerol phosphorylase (480 aa).

Catalysis depends on Asp190, which acts as the Nucleophile. Substrate is bound at residue Tyr194. Catalysis depends on Glu231, which acts as the Proton donor. Gln336 contributes to the substrate binding site.

It belongs to the glycosyl hydrolase 13 family. Sucrose phosphorylase subfamily.

The catalysed reaction is 2-O-(alpha-D-glucopyranosyl)glycerol + phosphate = alpha-D-glucose 1-phosphate + glycerol. In terms of biological role, catalyzes the reversible phosphorolysis of 2-O-alpha-D-glucosylglycerol with retention of the anomeric configuration, forming alpha-D-glucose 1-phosphate and glycerol. Has most likely a catabolic role, either regulating the intracellular levels of glucosylglycerol, which acts as a compatible solute, or degrading it when the environmental conditions change. Cannot catalyze the phosphorolysis of sucrose or glucosylglycerate. The sequence is that of Glucosylglycerol phosphorylase from Marinobacter adhaerens (strain DSM 23420 / HP15).